A 187-amino-acid polypeptide reads, in one-letter code: Flavin prenyltransferase UbiX (187 aa).

FMN-binding positions include 9–11, S34, and R123; that span reads GAS. Dimethylallyl phosphate contacts are provided by Y153 and K169.

The protein belongs to the UbiX/PAD1 family.

The catalysed reaction is dimethylallyl phosphate + FMNH2 = prenylated FMNH2 + phosphate. Flavin prenyltransferase that catalyzes the synthesis of the prenylated FMN cofactor (prenyl-FMN) for 4-hydroxy-3-polyprenylbenzoic acid decarboxylase UbiD. The prenyltransferase is metal-independent and links a dimethylallyl moiety from dimethylallyl monophosphate (DMAP) to the flavin N5 and C6 atoms of FMN. The protein is Flavin prenyltransferase UbiX of Helicobacter pylori (strain J99 / ATCC 700824) (Campylobacter pylori J99).